We begin with the raw amino-acid sequence, 106 residues long: Cytochrome c oxidase assembly protein COX16 homolog, mitochondrial (106 aa).

Residues 1–15 (MIAPAVLRALRKNKT) are Mitochondrial matrix-facing. The chain crosses the membrane as a helical span at residues 16–33 (LRYGVPMLLLVVGGSFGL). Over 34–106 (REFSQIRYDA…NPETLKPKTT (73 aa)) the chain is Mitochondrial intermembrane. The tract at residues 81–106 (IRGPRPWEDPQLLQGRNPETLKPKTT) is disordered.

It belongs to the COX16 family. As to quaternary structure, associates with the MITRAC complex. Interacts with MT-CO2/COX; specifically interacts with newly synthesized MT-CO2/COX. Interacts with SCO1, SCO2 and COA6.

The protein resides in the mitochondrion inner membrane. In terms of biological role, required for the assembly of the mitochondrial respiratory chain complex IV (CIV), also known as cytochrome c oxidase. Promotes the insertion of copper into the active site of cytochrome c oxidase subunit II (MT-CO2/COX2). Interacts specifically with newly synthesized MT-CO2/COX and its copper center-forming metallochaperones SCO1, SCO2 and COA6. Probably facilitates MT-CO2/COX2 association with the MITRAC assembly intermediate containing MT-CO1/COX1, thereby participating in merging the MT-CO1/COX1 and MT-CO2/COX2 assembly lines. This is Cytochrome c oxidase assembly protein COX16 homolog, mitochondrial from Mus musculus (Mouse).